A 123-amino-acid polypeptide reads, in one-letter code: Small ribosomal subunit protein uS12 (123 aa).

3-methylthioaspartic acid is present on aspartate 89. The tract at residues 100-123 (GSLDTSGVKGRNQGRSKYGTKKPK) is disordered. A compositionally biased stretch (basic residues) spans 111–123 (NQGRSKYGTKKPK).

It belongs to the universal ribosomal protein uS12 family. Part of the 30S ribosomal subunit. Contacts proteins S8 and S17. May interact with IF1 in the 30S initiation complex.

With S4 and S5 plays an important role in translational accuracy. Functionally, interacts with and stabilizes bases of the 16S rRNA that are involved in tRNA selection in the A site and with the mRNA backbone. Located at the interface of the 30S and 50S subunits, it traverses the body of the 30S subunit contacting proteins on the other side and probably holding the rRNA structure together. The combined cluster of proteins S8, S12 and S17 appears to hold together the shoulder and platform of the 30S subunit. This Pseudomonas syringae pv. syringae (strain B728a) protein is Small ribosomal subunit protein uS12.